The chain runs to 660 residues: Polycomb protein SCMH1 (660 aa).

MBT repeat units follow at residues 28-126 and 134-235; these read FTWD…LQPP and SSWP…LQPP. The disordered stretch occupies residues 233–345; it reads QPPGTKVVIP…EPDTSTVPQD (113 aa). Basic residues-rich tracts occupy residues 273–284 and 305–320; these read RGRKPGKKRGRT and FPKK…RKPR. Residues 330 to 343 show a composition bias toward low complexity; the sequence is PTTSTPEPDTSTVP. The region spanning 593–658 is the SAM domain; that stretch reads WTVEDVMQFV…SYHIDRLKQG (66 aa).

The protein belongs to the SCM family. Interacts with the SAM domain of PHC1 via its SAM domain in vitro. Associates with a PRC1-like complex. Strongly expressed in heart, muscle and pancreas. Weakly expressed in brain, placenta, lung, liver and kidney.

The protein localises to the nucleus. Associates with Polycomb group (PcG) multiprotein complexes; the complex class is required to maintain the transcriptionally repressive state of some genes. In Homo sapiens (Human), this protein is Polycomb protein SCMH1.